A 34-amino-acid chain; its full sequence is Conotoxin de13a (34 aa).

Residues P3 and P7 each carry the 4-hydroxyproline modification. 6'-bromotryptophan is present on W14. K18 is subject to 5-hydroxylysine. A 4-hydroxyproline modification is found at P21. A 5-hydroxylysine modification is found at K25. H32 carries the post-translational modification Histidine amide.

Post-translationally, contains 4 disulfide bonds. In terms of processing, the diastereomeric form of 5-hydroxylysine found was not conclusively established, but it is probably 5R. Expressed by the venom duct.

It is found in the secreted. The polypeptide is Conotoxin de13a (Conasprella delessertii (Sozon's cone)).